We begin with the raw amino-acid sequence, 462 residues long: 3-isopropylmalate dehydratase large subunit (462 aa).

3 residues coordinate [4Fe-4S] cluster: C337, C397, and C400.

It belongs to the aconitase/IPM isomerase family. LeuC type 1 subfamily. Heterodimer of LeuC and LeuD. [4Fe-4S] cluster is required as a cofactor.

It carries out the reaction (2R,3S)-3-isopropylmalate = (2S)-2-isopropylmalate. It participates in amino-acid biosynthesis; L-leucine biosynthesis; L-leucine from 3-methyl-2-oxobutanoate: step 2/4. In terms of biological role, catalyzes the isomerization between 2-isopropylmalate and 3-isopropylmalate, via the formation of 2-isopropylmaleate. This chain is 3-isopropylmalate dehydratase large subunit, found in Listeria innocua serovar 6a (strain ATCC BAA-680 / CLIP 11262).